The chain runs to 312 residues: Protein Rep40 (312 aa).

The SF3 helicase domain occupies 84–239 (DPQYAASVFL…LDHDFGKVTK (156 aa)). 110–117 (GPATTGKT) serves as a coordination point for ATP. A disordered region spans residues 264 to 301 (KGGAKKRPAPSDADISEPKRVRESVAQPSTSDAEASIN).

As to quaternary structure, homooligomer.

The protein localises to the host nucleus. It catalyses the reaction ATP + H2O = ADP + phosphate + H(+). Its function is as follows. Plays a critical role during packaging of viral DNA into empty capsids, where they are thought to be part of the packaging motor complex. The single stranded genomic DNA is packaged in a 3' to 5' direction and requires the association of viral DNA with Rep40. This chain is Protein Rep40 (Rep40), found in Mammalia (AAV-2).